We begin with the raw amino-acid sequence, 180 residues long: Ferric nitrobindin-like protein (180 aa).

The GXWXGXG signature appears at 21–27; it reads GRWEGAG.

Belongs to the nitrobindin family.

The polypeptide is Ferric nitrobindin-like protein (Kineococcus radiotolerans (strain ATCC BAA-149 / DSM 14245 / SRS30216)).